A 539-amino-acid polypeptide reads, in one-letter code: Putative cysteine ligase BshC (539 aa).

Residues 455 to 475 adopt a coiled-coil conformation; that stretch reads LQKNAAFIQDQLLFLERTVTK.

The protein belongs to the BshC family.

In terms of biological role, involved in bacillithiol (BSH) biosynthesis. May catalyze the last step of the pathway, the addition of cysteine to glucosamine malate (GlcN-Mal) to generate BSH. The chain is Putative cysteine ligase BshC from Bacillus velezensis (strain DSM 23117 / BGSC 10A6 / LMG 26770 / FZB42) (Bacillus amyloliquefaciens subsp. plantarum).